A 301-amino-acid chain; its full sequence is Rhodopsin (301 aa).

Residues 1 to 18 (LHMIHLHWYQYPPMNPMM) lie on the Extracellular side of the membrane. Residues 19–43 (YPLLLIFMLFTGILCLAGNFVTIWV) form a helical membrane-spanning segment. Over 44 to 55 (FMNTKSLRTPAN) the chain is Cytoplasmic. A helical membrane pass occupies residues 56 to 78 (LLVVNLAMSDFLMMFTMFPPMMV). The Extracellular portion of the chain corresponds to 79 to 92 (TCYYHTWTLGPTFC). A disulfide bond links C92 and C169. The helical transmembrane segment at 93–115 (QVYAFLGNLCGCASIWTMVFITF) threads the bilayer. The 'Ionic lock' involved in activated form stabilization motif lies at 116–118 (DRY). Residues 116–134 (DRYNVIVKGVAGEPLSTKK) lie on the Cytoplasmic side of the membrane. The helical transmembrane segment at 135–155 (ASLWILSVWVLSTAWCIAPFF) threads the bilayer. Residues 156–182 (GWNHYVPEGNLTGCGTDYLSEDILSRS) lie on the Extracellular side of the membrane. The N-linked (GlcNAc...) asparagine glycan is linked to N165. The chain crosses the membrane as a helical span at residues 183–204 (YLYIYSTWVYFLPLAITIYCYV). The Cytoplasmic segment spans residues 205 to 245 (FIIKAVAAHEKGMRDQAKKMGIKSLRNEEAQKTSAECRLAK). Residues 246–267 (NAMTTVALWFIAWTPCLLINWV) form a helical membrane-spanning segment. The Extracellular segment spans residues 268-278 (GMFARSYLSPV). The chain crosses the membrane as a helical span at residues 279-300 (YTIWGYVFAKANAVYNPIVYAI). An N6-(retinylidene)lysine modification is found at K288.

This sequence belongs to the G-protein coupled receptor 1 family. Opsin subfamily. In terms of assembly, homodimer. Interacts with GNAQ. Contains one covalently linked retinal chromophore.

The protein resides in the cell projection. It is found in the rhabdomere membrane. Its function is as follows. Photoreceptor required for image-forming vision at low light intensity. Can use both retinal and 3-dehydroretinal as visual pigment. Light-induced isomerization of 11-cis to all-trans retinal triggers a conformational change that activates signaling via G-proteins. Signaling via GNAQ probably mediates the activation of phospholipase C. The protein is Rhodopsin (RHO) of Cambarus hubrichti (Salem cave crayfish).